Reading from the N-terminus, the 1308-residue chain is Spermatogenesis-associated protein 31F1B (1308 aa).

Residues 7 to 27 (FLWDTECPLYVYFCFFIIVLI) traverse the membrane as a helical segment. Disordered regions lie at residues 464–488 (SPPIPLPEAAPPPSSTSPNESLDEP), 627–648 (SQPGKPEAYGSGDTFLPTAGKG), 844–863 (HGAQGHGRTEKVPPERQPLL), 902–927 (PTATDLESESVQEPLGSPRESTLLQG), 1005–1026 (FSTESQSPGKSKSGYVPTVAGK), 1084–1190 (GACP…AGLK), and 1204–1254 (MKSK…PKAQ). Residues 465–478 (PPIPLPEAAPPPSS) show a composition bias toward pro residues. Residues 1107 to 1117 (METDSEQDMED) show a composition bias toward acidic residues.

Belongs to the SPATA31 family.

It is found in the membrane. This Mus musculus (Mouse) protein is Spermatogenesis-associated protein 31F1B.